Consider the following 297-residue polypeptide: Glycerol-3-phosphate dehydrogenase [NAD(P)+] (297 aa).

Positions 11, 33, and 79 each coordinate NADPH. Residues K79, G107, and S109 each coordinate sn-glycerol 3-phosphate. A111 lines the NADPH pocket. Positions 161, 214, 224, 225, and 226 each coordinate sn-glycerol 3-phosphate. K161 serves as the catalytic Proton acceptor. R225 is a binding site for NADPH. 2 residues coordinate NADPH: V249 and E251.

The protein belongs to the NAD-dependent glycerol-3-phosphate dehydrogenase family.

Its subcellular location is the cytoplasm. The catalysed reaction is sn-glycerol 3-phosphate + NAD(+) = dihydroxyacetone phosphate + NADH + H(+). The enzyme catalyses sn-glycerol 3-phosphate + NADP(+) = dihydroxyacetone phosphate + NADPH + H(+). It functions in the pathway membrane lipid metabolism; glycerophospholipid metabolism. Functionally, catalyzes the reduction of the glycolytic intermediate dihydroxyacetone phosphate (DHAP) to sn-glycerol 3-phosphate (G3P), the key precursor for phospholipid synthesis. The protein is Glycerol-3-phosphate dehydrogenase [NAD(P)+] of Campylobacter jejuni subsp. jejuni serotype O:2 (strain ATCC 700819 / NCTC 11168).